A 149-amino-acid chain; its full sequence is Large ribosomal subunit protein uL15C (149 aa).

The interval 21-40 (RIGKHRKQRGGRGNAGGQHH) is disordered.

It belongs to the universal ribosomal protein uL15 family. Component of the large ribosomal subunit.

Its subcellular location is the cytoplasm. It localises to the cytosol. The protein localises to the endoplasmic reticulum. Its function is as follows. Component of the large ribosomal subunit. The ribosome is a large ribonucleoprotein complex responsible for the synthesis of proteins in the cell. This is Large ribosomal subunit protein uL15C (rpl27a-3) from Entamoeba histolytica (strain ATCC 30459 / HM-1:IMSS / ABRM).